Reading from the N-terminus, the 256-residue chain is tRNA (guanine-N(1)-)-methyltransferase (256 aa).

S-adenosyl-L-methionine is bound by residues Gly-119 and 139 to 144 (IGDYVV).

This sequence belongs to the RNA methyltransferase TrmD family. In terms of assembly, homodimer.

The protein localises to the cytoplasm. It catalyses the reaction guanosine(37) in tRNA + S-adenosyl-L-methionine = N(1)-methylguanosine(37) in tRNA + S-adenosyl-L-homocysteine + H(+). Specifically methylates guanosine-37 in various tRNAs. This is tRNA (guanine-N(1)-)-methyltransferase from Nitrosospira multiformis (strain ATCC 25196 / NCIMB 11849 / C 71).